Consider the following 251-residue polypeptide: uncharacterized protein (251 aa).

The signal sequence occupies residues 1–18 (MKILIILSIILCSLFGRA).

This sequence belongs to the MlaA family.

This is an uncharacterized protein from Rickettsia prowazekii (strain Madrid E).